We begin with the raw amino-acid sequence, 283 residues long: Lipoyl synthase (283 aa).

[4Fe-4S] cluster-binding residues include Cys-35, Cys-40, Cys-46, Cys-61, Cys-65, Cys-68, and Ser-273. Residues 47–262 (FRERQATFLI…RAAALATGFA (216 aa)) enclose the Radical SAM core domain.

It belongs to the radical SAM superfamily. Lipoyl synthase family. [4Fe-4S] cluster serves as cofactor.

Its subcellular location is the cytoplasm. It carries out the reaction [[Fe-S] cluster scaffold protein carrying a second [4Fe-4S](2+) cluster] + N(6)-octanoyl-L-lysyl-[protein] + 2 oxidized [2Fe-2S]-[ferredoxin] + 2 S-adenosyl-L-methionine + 4 H(+) = [[Fe-S] cluster scaffold protein] + N(6)-[(R)-dihydrolipoyl]-L-lysyl-[protein] + 4 Fe(3+) + 2 hydrogen sulfide + 2 5'-deoxyadenosine + 2 L-methionine + 2 reduced [2Fe-2S]-[ferredoxin]. The protein operates within protein modification; protein lipoylation via endogenous pathway; protein N(6)-(lipoyl)lysine from octanoyl-[acyl-carrier-protein]: step 2/2. Its function is as follows. Catalyzes the radical-mediated insertion of two sulfur atoms into the C-6 and C-8 positions of the octanoyl moiety bound to the lipoyl domains of lipoate-dependent enzymes, thereby converting the octanoylated domains into lipoylated derivatives. The polypeptide is Lipoyl synthase (Geobacter metallireducens (strain ATCC 53774 / DSM 7210 / GS-15)).